The sequence spans 777 residues: DNA ligase (777 aa).

Residues 35–39 (DAEYD), 84–85 (SL), and E116 contribute to the NAD(+) site. The N6-AMP-lysine intermediate role is filled by K118. NAD(+) contacts are provided by R139, E176, K293, and K317. Zn(2+)-binding residues include C411, C414, C429, and C435. The BRCT domain maps to 691 to 777 (MESQPLEGQT…NQHGIDPGAL (87 aa)).

The protein belongs to the NAD-dependent DNA ligase family. LigA subfamily. Mg(2+) serves as cofactor. Requires Mn(2+) as cofactor.

The catalysed reaction is NAD(+) + (deoxyribonucleotide)n-3'-hydroxyl + 5'-phospho-(deoxyribonucleotide)m = (deoxyribonucleotide)n+m + AMP + beta-nicotinamide D-nucleotide.. In terms of biological role, DNA ligase that catalyzes the formation of phosphodiester linkages between 5'-phosphoryl and 3'-hydroxyl groups in double-stranded DNA using NAD as a coenzyme and as the energy source for the reaction. It is essential for DNA replication and repair of damaged DNA. This chain is DNA ligase, found in Alcanivorax borkumensis (strain ATCC 700651 / DSM 11573 / NCIMB 13689 / SK2).